The primary structure comprises 490 residues: Dual specificity protein kinase CLK3 (490 aa).

Tyrosine 7 is subject to Phosphotyrosine. Serine 9, serine 49, serine 51, serine 67, serine 76, and serine 78 each carry phosphoserine. The disordered stretch occupies residues arginine 22–aspartate 138. Composition is skewed to basic and acidic residues over residues tyrosine 26–proline 56 and glutamate 63–serine 76. Residues threonine 103–arginine 116 show a composition bias toward basic residues. The span at serine 117–lysine 130 shows a compositional bias: low complexity. The residue at position 135 (serine 135) is a Phosphoserine. The Protein kinase domain maps to tyrosine 156–phenylalanine 472. ATP is bound by residues leucine 162–valine 170 and lysine 186. Residue aspartate 283 is the Proton acceptor of the active site.

Belongs to the protein kinase superfamily. CMGC Ser/Thr protein kinase family. Lammer subfamily. Post-translationally, autophosphorylates on all three types of residues.

It localises to the nucleus. Its subcellular location is the cytoplasm. It is found in the cytoplasmic vesicle. The protein localises to the secretory vesicle. The protein resides in the acrosome. It catalyses the reaction L-seryl-[protein] + ATP = O-phospho-L-seryl-[protein] + ADP + H(+). The enzyme catalyses L-threonyl-[protein] + ATP = O-phospho-L-threonyl-[protein] + ADP + H(+). The catalysed reaction is L-tyrosyl-[protein] + ATP = O-phospho-L-tyrosyl-[protein] + ADP + H(+). Leucettine L41 inhibits its kinase activity and affects the regulation of alternative splicing mediated by phosphorylation of SR proteins. Functionally, dual specificity kinase acting on both serine/threonine and tyrosine-containing substrates. Phosphorylates serine- and arginine-rich (SR) proteins of the spliceosomal complex. May be a constituent of a network of regulatory mechanisms that enable SR proteins to control RNA splicing and can cause redistribution of SR proteins from speckles to a diffuse nucleoplasmic distribution. Phosphorylates SRSF1 and SRSF3. Regulates the alternative splicing of tissue factor (F3) pre-mRNA in endothelial cells. This chain is Dual specificity protein kinase CLK3 (CLK3), found in Bos taurus (Bovine).